The chain runs to 332 residues: Biotin synthase (332 aa).

Residues 53 to 282 (YFGKKVKLNM…TKEIRISGGR (230 aa)) form the Radical SAM core domain. Positions 71, 75, and 78 each coordinate [4Fe-4S] cluster. Residues Cys-115, Cys-147, Cys-207, and Arg-277 each contribute to the [2Fe-2S] cluster site.

The protein belongs to the radical SAM superfamily. Biotin synthase family. As to quaternary structure, homodimer. [4Fe-4S] cluster is required as a cofactor. It depends on [2Fe-2S] cluster as a cofactor.

The catalysed reaction is (4R,5S)-dethiobiotin + (sulfur carrier)-SH + 2 reduced [2Fe-2S]-[ferredoxin] + 2 S-adenosyl-L-methionine = (sulfur carrier)-H + biotin + 2 5'-deoxyadenosine + 2 L-methionine + 2 oxidized [2Fe-2S]-[ferredoxin]. It functions in the pathway cofactor biosynthesis; biotin biosynthesis; biotin from 7,8-diaminononanoate: step 2/2. Its function is as follows. Catalyzes the conversion of dethiobiotin (DTB) to biotin by the insertion of a sulfur atom into dethiobiotin via a radical-based mechanism. This is Biotin synthase from Bacillus anthracis.